Consider the following 240-residue polypeptide: UDP-2,3-diacylglucosamine hydrolase (240 aa).

Mn(2+)-binding residues include Asp-9, His-11, Asp-43, Asn-81, and His-116. 81-82 (NR) serves as a coordination point for substrate. Substrate is bound by residues Asp-124, Ser-162, Lys-166, Lys-169, and His-197. Residues His-197 and His-199 each contribute to the Mn(2+) site.

This sequence belongs to the LpxH family. Requires Mn(2+) as cofactor.

The protein localises to the cell inner membrane. The catalysed reaction is UDP-2-N,3-O-bis[(3R)-3-hydroxytetradecanoyl]-alpha-D-glucosamine + H2O = 2-N,3-O-bis[(3R)-3-hydroxytetradecanoyl]-alpha-D-glucosaminyl 1-phosphate + UMP + 2 H(+). It participates in glycolipid biosynthesis; lipid IV(A) biosynthesis; lipid IV(A) from (3R)-3-hydroxytetradecanoyl-[acyl-carrier-protein] and UDP-N-acetyl-alpha-D-glucosamine: step 4/6. In terms of biological role, hydrolyzes the pyrophosphate bond of UDP-2,3-diacylglucosamine to yield 2,3-diacylglucosamine 1-phosphate (lipid X) and UMP by catalyzing the attack of water at the alpha-P atom. Involved in the biosynthesis of lipid A, a phosphorylated glycolipid that anchors the lipopolysaccharide to the outer membrane of the cell. This is UDP-2,3-diacylglucosamine hydrolase from Neisseria meningitidis serogroup C / serotype 2a (strain ATCC 700532 / DSM 15464 / FAM18).